The primary structure comprises 239 residues: MGQKINPLGFRLGTTQKHHSFWFAQPKNYSEGLQEDKKIRDCIKNYIQKNRKKSSNRKLESDSSSEVITHNRKNDSGSSSEVITRIEIQKEIDTIHVIIHIGFPNLLKKKGAIEELEKDLQKEIHSVNQRLNISIEKVKEPYREPNILAEYIAFQLKNRVSFRKAMKKAMELTKKADIKGVKVKIAGRLGGKEIARAECIKKGRLPLQTIRAKIDYCCYPIRTIYGVLGVKIWIFVDEE.

Positions 43-139 constitute a KH type-2 domain; that stretch reads IKNYIQKNRK…RLNISIEKVK (97 aa). Residues 50–80 form a disordered region; sequence NRKKSSNRKLESDSSSEVITHNRKNDSGSSS.

The protein belongs to the universal ribosomal protein uS3 family. Part of the 30S ribosomal subunit.

It localises to the plastid. The protein localises to the chloroplast. This chain is Small ribosomal subunit protein uS3c (rps3), found in Lolium perenne (Perennial ryegrass).